A 566-amino-acid chain; its full sequence is MQITNKIHFRNIRGDIFGGLTAAVIALPMALAFGVASGAGAEAGLWGAVLVGFFAALFGGTPTLISEPTGPMTVVMTAVIAHFTASAATPEEGLAIAFTVVMMAGVFQIIFGSLKLGKYVTMMPYTVISGFMSGIGIILVILQLAPFLGQASPGGGVIGTLQNLPTLLSNIQPGETALALGTVAIIWFMPEKFKKVIPPQLVALVLGTVIAFFVFPPEVSDLRRIGEIRAGFPELVRPSFSPVEFQRMILDAAVLGMLGCIDALLTSVVADSLTRTEHNSNKELIGQGLGNLFSGLFGGIAGAGATMGTVVNIQSGGRTALSGLVRAFVLLVVILGAASLTATIPLAVLAGIAFKVGVDIIDWSFLKRAHEISPKGALIMYGVILLTVLVDLIVAVGVGVFVANVLTIERMSNLQSEKVQTVSDADDNIRLTTTEKRWLDEGQGRVLLFQLSGPMIFGVAKAIAREHNAMGDCDALVFDIGEVPHMGVTASLALENAIEEALDKERQVYIVGAAGQTRRRLEKLKLFKRVPPDKCLMSREEALKNAVLGIYPHLADGVTAPSSEMG.

Residues 1–15 (MQITNKIHFRNIRGD) lie on the Cytoplasmic side of the membrane. Residues 16–36 (IFGGLTAAVIALPMALAFGVA) traverse the membrane as a helical segment. The Periplasmic portion of the chain corresponds to 37-42 (SGAGAE). A helical transmembrane segment spans residues 43-63 (AGLWGAVLVGFFAALFGGTPT). Leucine 64 is a topological domain (cytoplasmic). A helical membrane pass occupies residues 65–85 (ISEPTGPMTVVMTAVIAHFTA). Threonine 69 lines the hydrogencarbonate pocket. The Periplasmic segment spans residues 86–93 (SAATPEEG). The helical transmembrane segment at 94 to 114 (LAIAFTVVMMAGVFQIIFGSL) threads the bilayer. Topologically, residues 115-126 (KLGKYVTMMPYT) are cytoplasmic. Residues 127-147 (VISGFMSGIGIILVILQLAPF) traverse the membrane as a helical segment. At 148 to 169 (LGQASPGGGVIGTLQNLPTLLS) the chain is on the periplasmic side. Residues 170–190 (NIQPGETALALGTVAIIWFMP) traverse the membrane as a helical segment. Topologically, residues 191–196 (EKFKKV) are cytoplasmic. The chain crosses the membrane as a helical span at residues 197–217 (IPPQLVALVLGTVIAFFVFPP). At 218–247 (EVSDLRRIGEIRAGFPELVRPSFSPVEFQR) the chain is on the periplasmic side. Residues 248-268 (MILDAAVLGMLGCIDALLTSV) form a helical membrane-spanning segment. 3 residues coordinate Na(+): aspartate 262, threonine 266, and glycine 304. Topologically, residues 269 to 318 (VADSLTRTEHNSNKELIGQGLGNLFSGLFGGIAGAGATMGTVVNIQSGGR) are cytoplasmic. Alanine 305 is a hydrogencarbonate binding site. Threonine 306 serves as a coordination point for Na(+). The chain crosses the membrane as a helical span at residues 319 to 339 (TALSGLVRAFVLLVVILGAAS). Leucine 340 is a topological domain (periplasmic). Residues 341-361 (TATIPLAVLAGIAFKVGVDII) form a helical membrane-spanning segment. At 362–371 (DWSFLKRAHE) the chain is on the cytoplasmic side. Residues 372–392 (ISPKGALIMYGVILLTVLVDL) traverse the membrane as a helical segment. A topological domain (periplasmic) is located at residue isoleucine 393. The chain crosses the membrane as a helical span at residues 394–414 (VAVGVGVFVANVLTIERMSNL). Residues 415-566 (QSEKVQTVSD…GVTAPSSEMG (152 aa)) lie on the Cytoplasmic side of the membrane. The STAS domain occupies 436–546 (KRWLDEGQGR…MSREEALKNA (111 aa)).

It belongs to the SLC26A/SulP transporter (TC 2.A.53) family.

The protein resides in the cell inner membrane. Its function is as follows. Low/medium affinity, Na(+)-dependent bicarbonate transporter. In Picosynechococcus sp. (strain ATCC 27264 / PCC 7002 / PR-6) (Agmenellum quadruplicatum), this protein is Bicarbonate transporter BicA (bicA).